Consider the following 473-residue polypeptide: Rop guanine nucleotide exchange factor 3 (473 aa).

Residues M1–E28 are disordered. A compositionally biased stretch (polar residues) spans P16–E28. Residues L95 to E473 form the PRONE domain.

Its function is as follows. Guanine-nucleotide exchange factor (GEF) that acts as an activator of Rop (Rho of plants) GTPases by promoting the exchange of GDP for GTP. This chain is Rop guanine nucleotide exchange factor 3 (ROPGEF3), found in Arabidopsis thaliana (Mouse-ear cress).